Consider the following 114-residue polypeptide: DNA-binding protein Mbur_0117 (114 aa).

Positions 14–37 (ELQQQQSSPQNDAQAAYQQEQAQA) are disordered. The segment covering 16 to 35 (QQQQSSPQNDAQAAYQQEQA) has biased composition (low complexity).

This sequence belongs to the PDCD5 family.

This chain is DNA-binding protein Mbur_0117, found in Methanococcoides burtonii (strain DSM 6242 / NBRC 107633 / OCM 468 / ACE-M).